The sequence spans 110 residues: MKYLAAYLLLTVGGKNSPSASDIESVLSTVGIESESERVEALIKELDGKDIDELIAAGNEKLATVPSGGAAAAAAPAAAGGAAPAAEEAAKEEAKEEEESDEDMGFGLFD.

The segment at 83 to 110 is disordered; sequence APAAEEAAKEEAKEEEESDEDMGFGLFD. The segment covering 95–104 has biased composition (acidic residues); it reads KEEEESDEDM. A Phosphoserine modification is found at S100.

The protein belongs to the eukaryotic ribosomal protein P1/P2 family. Component of the large ribosomal subunit (LSU). Mature yeast ribosomes consist of a small (40S) and a large (60S) subunit. The 40S small subunit contains 1 molecule of ribosomal RNA (18S rRNA) and at least 33 different proteins. The large 60S subunit contains 3 rRNA molecules (25S, 5.8S and 5S rRNA) and at least 46 different proteins. The acidic ribosomal P-proteins form the stalk structure of the 60S subunit. They are organized as a pentameric complex in which uL10/P0 interacts with 2 heterodimers of P1 and P2 proteins.

The protein resides in the cytoplasm. Its function is as follows. Component of the ribosome, a large ribonucleoprotein complex responsible for the synthesis of proteins in the cell. The small ribosomal subunit (SSU) binds messenger RNAs (mRNAs) and translates the encoded message by selecting cognate aminoacyl-transfer RNA (tRNA) molecules. The large subunit (LSU) contains the ribosomal catalytic site termed the peptidyl transferase center (PTC), which catalyzes the formation of peptide bonds, thereby polymerizing the amino acids delivered by tRNAs into a polypeptide chain. The nascent polypeptides leave the ribosome through a tunnel in the LSU and interact with protein factors that function in enzymatic processing, targeting, and the membrane insertion of nascent chains at the exit of the ribosomal tunnel. This is Large ribosomal subunit protein P2C (rpp203) from Schizosaccharomyces pombe (strain 972 / ATCC 24843) (Fission yeast).